We begin with the raw amino-acid sequence, 440 residues long: Thymidine phosphorylase (440 aa).

This sequence belongs to the thymidine/pyrimidine-nucleoside phosphorylase family. In terms of assembly, homodimer.

The catalysed reaction is thymidine + phosphate = 2-deoxy-alpha-D-ribose 1-phosphate + thymine. It participates in pyrimidine metabolism; dTMP biosynthesis via salvage pathway; dTMP from thymine: step 1/2. Functionally, the enzymes which catalyze the reversible phosphorolysis of pyrimidine nucleosides are involved in the degradation of these compounds and in their utilization as carbon and energy sources, or in the rescue of pyrimidine bases for nucleotide synthesis. In Erwinia tasmaniensis (strain DSM 17950 / CFBP 7177 / CIP 109463 / NCPPB 4357 / Et1/99), this protein is Thymidine phosphorylase.